The primary structure comprises 85 residues: Antibacterial factor-related peptide 1 (85 aa).

Positions 1–19 (MLYFCLLLVLLLPNNGVSS) are cleaved as a signal peptide.

Expressed in the pharynx and body wall muscle.

The protein localises to the secreted. In Caenorhabditis elegans, this protein is Antibacterial factor-related peptide 1.